Reading from the N-terminus, the 248-residue chain is Ribosomal RNA small subunit methyltransferase J (248 aa).

S-adenosyl-L-methionine-binding positions include arginine 97–aspartate 98, glutamate 113–arginine 114, and aspartate 167.

The protein belongs to the methyltransferase superfamily. RsmJ family.

It is found in the cytoplasm. The enzyme catalyses guanosine(1516) in 16S rRNA + S-adenosyl-L-methionine = N(2)-methylguanosine(1516) in 16S rRNA + S-adenosyl-L-homocysteine + H(+). In terms of biological role, specifically methylates the guanosine in position 1516 of 16S rRNA. In Aeromonas hydrophila subsp. hydrophila (strain ATCC 7966 / DSM 30187 / BCRC 13018 / CCUG 14551 / JCM 1027 / KCTC 2358 / NCIMB 9240 / NCTC 8049), this protein is Ribosomal RNA small subunit methyltransferase J.